A 127-amino-acid chain; its full sequence is Large ribosomal subunit protein bL12 (127 aa).

Residues 101–127 (VKTGVSKEEAEDAKKQLVESGAEVEIK) form a disordered region. Residues 105-117 (VSKEEAEDAKKQL) are compositionally biased toward basic and acidic residues.

Belongs to the bacterial ribosomal protein bL12 family. As to quaternary structure, homodimer. Part of the ribosomal stalk of the 50S ribosomal subunit. Forms a multimeric L10(L12)X complex, where L10 forms an elongated spine to which 2 to 4 L12 dimers bind in a sequential fashion. Binds GTP-bound translation factors.

In terms of biological role, forms part of the ribosomal stalk which helps the ribosome interact with GTP-bound translation factors. Is thus essential for accurate translation. The polypeptide is Large ribosomal subunit protein bL12 (Geobacter metallireducens (strain ATCC 53774 / DSM 7210 / GS-15)).